A 341-amino-acid polypeptide reads, in one-letter code: MKALSKLKAEPGIWMTDAPKPEVGHNDLLIKIRKTAICGTDVHIYKWDEWAQKTIPTPMVVGHEYVGEVVDMGQEVRGFKVGDRVSGEGHITCGHCRNCRAGRVHLCRNTTGVGVNREGAFAEYLVIPAFNAFKIPDNISDELASIFDPFGNAVHTALSFDLVGEDVLITGAGPIGIMAAAVAKHVGARHVVISDVNEYRLELARKMGATRAVNVANEKLEDVIKELGMTEGFDIGLEMSGVPSAFNSMLNNMNHGGKVAMLGIPPSDMAVDWNQVIFKGLVIKGIYGREMFETWYKMASLIQSGLDLNPIITHQYSIDDFQAGFDMMISGQSGKVILNWD.

Cysteine 38 provides a ligand contact to Zn(2+). Catalysis depends on charge relay system residues threonine 40 and histidine 43. Zn(2+) contacts are provided by histidine 63, glutamate 64, cysteine 93, cysteine 96, cysteine 99, and cysteine 107. NAD(+)-binding positions include isoleucine 175, aspartate 195, arginine 200, 262–264, and 286–287; these read LGI and IY.

Belongs to the zinc-containing alcohol dehydrogenase family. Homotetramer. Requires Zn(2+) as cofactor.

The protein resides in the cytoplasm. It carries out the reaction L-threonine + NAD(+) = (2S)-2-amino-3-oxobutanoate + NADH + H(+). It functions in the pathway amino-acid degradation; L-threonine degradation via oxydo-reductase pathway; glycine from L-threonine: step 1/2. In terms of biological role, catalyzes the NAD(+)-dependent oxidation of L-threonine to 2-amino-3-ketobutyrate. This is L-threonine 3-dehydrogenase from Pseudoalteromonas translucida (strain TAC 125).